Reading from the N-terminus, the 391-residue chain is Toluene efflux pump periplasmic linker protein TtgG (391 aa).

Residues 1 to 32 (MRAERWSQTVRQIRSPRALRVIPLTALMLISG) form the signal peptide. Residue cysteine 33 is the site of N-palmitoyl cysteine attachment. The S-diacylglycerol cysteine moiety is linked to residue cysteine 33. The stretch at 107-136 (RTYEAQLRRAEANRTSAQNLARRYETLLKT) forms a coiled coil.

This sequence belongs to the membrane fusion protein (MFP) (TC 8.A.1) family.

Its subcellular location is the cell inner membrane. In terms of biological role, the periplasmic linker component of an organic solvent efflux pump. Involved in export of a number of organic solvents, including toluene and styrene. This is the most important solvent efflux pump in this strain, although it can export AMP and some antibiotics. This Pseudomonas putida (strain DOT-T1E) protein is Toluene efflux pump periplasmic linker protein TtgG (ttgG).